A 186-amino-acid chain; its full sequence is Ribosome-recycling factor (186 aa).

It belongs to the RRF family.

The protein localises to the cytoplasm. In terms of biological role, responsible for the release of ribosomes from messenger RNA at the termination of protein biosynthesis. May increase the efficiency of translation by recycling ribosomes from one round of translation to another. The sequence is that of Ribosome-recycling factor from Chelativorans sp. (strain BNC1).